We begin with the raw amino-acid sequence, 403 residues long: Phosphoglycerate kinase (403 aa).

Residues D22–N24, R37, H60–R63, R119, and R156 each bind substrate. ATP-binding positions include K206, G302, E333, and G359–S362.

The protein belongs to the phosphoglycerate kinase family. As to quaternary structure, monomer.

Its subcellular location is the cytoplasm. The enzyme catalyses (2R)-3-phosphoglycerate + ATP = (2R)-3-phospho-glyceroyl phosphate + ADP. It functions in the pathway carbohydrate degradation; glycolysis; pyruvate from D-glyceraldehyde 3-phosphate: step 2/5. The protein is Phosphoglycerate kinase of Streptomyces avermitilis (strain ATCC 31267 / DSM 46492 / JCM 5070 / NBRC 14893 / NCIMB 12804 / NRRL 8165 / MA-4680).